The primary structure comprises 256 residues: Transcription factor BHLH094 (256 aa).

The segment at 1-125 (MDPAPSLAAE…TPPEPPKQDY (125 aa)) is disordered. Basic and acidic residues predominate over residues 79–97 (PEAKRLKPMKSSDKNDSLR). A basic motif; degenerate region spans residues 134–147 (QATDSHSLAERARR). Residues 134–184 (QATDSHSLAERARREKISERMKILQDLVPGCNKVIGKASVLDEIINYIQSL) enclose the bHLH domain. The helix-loop-helix motif stretch occupies residues 148–184 (EKISERMKILQDLVPGCNKVIGKASVLDEIINYIQSL).

The protein belongs to the bHLH protein family. Interacts with RSS3. Forms a ternary complex with RSS3 and TIFY11A/JAZ9 in the nucleus.

Its subcellular location is the nucleus. Transcription factor that forms a ternary complex with RSS3 and TIFY11A/JAZ9 to negatively regulate jasmonate-responsive genes. This is Transcription factor BHLH094 from Oryza sativa subsp. japonica (Rice).